The chain runs to 360 residues: Probable dual-specificity RNA methyltransferase RlmN (360 aa).

The active-site Proton acceptor is the Glu-91. Positions Gln-97–Asp-335 constitute a Radical SAM core domain. Residues Cys-104 and Cys-340 are joined by a disulfide bond. [4Fe-4S] cluster-binding residues include Cys-111, Cys-115, and Cys-118. S-adenosyl-L-methionine-binding positions include Gly-163–Glu-164, Ser-195, Ser-218–His-220, and Asn-296. Cys-340 functions as the S-methylcysteine intermediate in the catalytic mechanism.

This sequence belongs to the radical SAM superfamily. RlmN family. [4Fe-4S] cluster serves as cofactor.

It is found in the cytoplasm. It catalyses the reaction adenosine(2503) in 23S rRNA + 2 reduced [2Fe-2S]-[ferredoxin] + 2 S-adenosyl-L-methionine = 2-methyladenosine(2503) in 23S rRNA + 5'-deoxyadenosine + L-methionine + 2 oxidized [2Fe-2S]-[ferredoxin] + S-adenosyl-L-homocysteine. The catalysed reaction is adenosine(37) in tRNA + 2 reduced [2Fe-2S]-[ferredoxin] + 2 S-adenosyl-L-methionine = 2-methyladenosine(37) in tRNA + 5'-deoxyadenosine + L-methionine + 2 oxidized [2Fe-2S]-[ferredoxin] + S-adenosyl-L-homocysteine. Specifically methylates position 2 of adenine 2503 in 23S rRNA and position 2 of adenine 37 in tRNAs. This chain is Probable dual-specificity RNA methyltransferase RlmN, found in Streptococcus equi subsp. equi (strain 4047).